The sequence spans 1700 residues: RNA replication protein (1700 aa).

In terms of domain architecture, Alphavirus-like MT spans 299–462; that stretch reads DPYAVRSHTH…VHEVKNSNWL (164 aa). A (+)RNA virus helicase ATP-binding domain is found at 842–991; it reads VLITSDEAGE…LFAPLSPFYL (150 aa). 868–875 serves as a coordination point for ATP; sequence GAGGAGKT. Positions 992-1128 constitute a (+)RNA virus helicase C-terminal domain; sequence NWTWRMTRPV…LVREYELNQP (137 aa). The RdRp catalytic domain maps to 1369-1480; the sequence is GHATINDCEA…SVKPAFKELE (112 aa).

This sequence belongs to the potexvirus/carlavirus RNA replication protein family.

The enzyme catalyses RNA(n) + a ribonucleoside 5'-triphosphate = RNA(n+1) + diphosphate. It catalyses the reaction ATP + H2O = ADP + phosphate + H(+). Its function is as follows. RNA replication. The protein possibly functions as an ATP-binding helicase. This is RNA replication protein from Sclerotinia sclerotiorum (White mold).